Reading from the N-terminus, the 579-residue chain is 2-isopropylmalate synthase (579 aa).

Residues 40 to 314 enclose the Pyruvate carboxyltransferase domain; the sequence is PRWCAVDLRD…DPMIDFSDID (275 aa). Residues Asp-49, His-253, His-255, and Asn-289 each coordinate Mg(2+). The regulatory domain stretch occupies residues 456 to 579; the sequence is SDEEQAQWGR…VNRAVRDAQA (124 aa).

Belongs to the alpha-IPM synthase/homocitrate synthase family. LeuA type 2 subfamily. As to quaternary structure, homodimer. Requires Mg(2+) as cofactor.

The protein resides in the cytoplasm. It catalyses the reaction 3-methyl-2-oxobutanoate + acetyl-CoA + H2O = (2S)-2-isopropylmalate + CoA + H(+). It functions in the pathway amino-acid biosynthesis; L-leucine biosynthesis; L-leucine from 3-methyl-2-oxobutanoate: step 1/4. Its function is as follows. Catalyzes the condensation of the acetyl group of acetyl-CoA with 3-methyl-2-oxobutanoate (2-ketoisovalerate) to form 3-carboxy-3-hydroxy-4-methylpentanoate (2-isopropylmalate). The polypeptide is 2-isopropylmalate synthase (Paenarthrobacter aurescens (strain TC1)).